A 299-amino-acid polypeptide reads, in one-letter code: Hydrogenase maturation factor HypB (299 aa).

Cys-2, Cys-5, and Cys-7 together coordinate Ni(2+). Residues 18-57 are disordered; that stretch reads EVGDDGHGHHHHDGHHDHDHDHDHHRGDHEHDDHHHAEDG. Residues 31–57 show a composition bias toward basic and acidic residues; it reads GHHDHDHDHDHHRGDHEHDDHHHAEDG. The interval 107–268 is G-domain; sequence ALNFVSSPGS…LRVNPRLQTL (162 aa). Residues Cys-167, His-168, and Cys-199 each contribute to the Ni(2+) site. Positions 167, 168, and 199 each coordinate Zn(2+).

This sequence belongs to the SIMIBI class G3E GTPase family. HypB/HupM subfamily.

Involved in the maturation of [NiFe] hydrogenases. Required for nickel insertion into the metal center of the hydrogenase. Exhibits a low intrinsic GTPase activity, which is essential for nickel insertion. Is able to bind 4 nickel ions per subunit. Can also bind zinc. This is Hydrogenase maturation factor HypB from Rhizobium leguminosarum bv. viciae.